Reading from the N-terminus, the 297-residue chain is Small ribosomal subunit protein uS2 (297 aa).

Over residues 263–289 the composition is skewed to low complexity; sequence AAPTSWEADGGDWAASSAAPAGESWAE. Residues 263–297 form a disordered region; it reads AAPTSWEADGGDWAASSAAPAGESWAETQPAEAKW.

It belongs to the universal ribosomal protein uS2 family. Component of the small ribosomal subunit. Mature ribosomes consist of a small (40S) and a large (60S) subunit. The 40S subunit contains about 33 different proteins and 1 molecule of RNA (18S). The 60S subunit contains about 49 different proteins and 3 molecules of RNA (25S, 5.8S and 5S). Interacts with rps21.

The protein resides in the cytoplasm. Functionally, required for the assembly and/or stability of the 40S ribosomal subunit. Required for the processing of the 20S rRNA-precursor to mature 18S rRNA in a late step of the maturation of 40S ribosomal subunits. The polypeptide is Small ribosomal subunit protein uS2 (rps0) (Neosartorya fischeri (strain ATCC 1020 / DSM 3700 / CBS 544.65 / FGSC A1164 / JCM 1740 / NRRL 181 / WB 181) (Aspergillus fischerianus)).